An 807-amino-acid chain; its full sequence is Glycerol-3-phosphate acyltransferase (807 aa).

An HXXXXD motif motif is present at residues 308–313 (CHRSHM).

It belongs to the GPAT/DAPAT family.

It localises to the cell inner membrane. It catalyses the reaction sn-glycerol 3-phosphate + an acyl-CoA = a 1-acyl-sn-glycero-3-phosphate + CoA. Its pathway is phospholipid metabolism; CDP-diacylglycerol biosynthesis; CDP-diacylglycerol from sn-glycerol 3-phosphate: step 1/3. The sequence is that of Glycerol-3-phosphate acyltransferase from Shewanella amazonensis (strain ATCC BAA-1098 / SB2B).